Reading from the N-terminus, the 689-residue chain is MQNIDLISEEEAQKLLEELADKIAAYNHAYYIEDNPLVSDSEYDQLFNTNLKLEQKFPHLILENSPSKKVGAKIANKFAKVTHQVPMLSLSNAFDEQDVRDFVDRIKIFLRLNEFAPIFCEPKIDGVSFSAVYKHGVLTTGATRGDGYVGEDITANIKTIKNFPHKIDNVPEFLEVRGEIYIEKQDFLNLNKEQEEQGKDKFANPRNAAAGSLRQLDSSITAKRPLKYFVYSGGVTEQNLASSQDQLLTKLKECGFNINEISKLASSEEEIFAFYEYLKTNRENLPYEIDGVVYKLNDFALQNRMGFIARNPRFATAHKFPAIIGQTKLLSITVQVGRTGTLTPVAELEPIEIGGVTVSRATLHNFQEIARKDLRIKDYVFLQRAGDVIPKIMGVDFDKRPNDTETFDTPLFCLSCNSKLHYTPEDIIIRCDNGLNCPAQNYERIRHFVSKNAMDIEGLGRKQVEFLIDKGLISNPLDIFFLKEKNDSSLAKLENMDGWGKKSVENLFKNIEKSKNVSLPRFIYALGIRHIGEQNAKLLAREFGSYNNFIAQMELLRTNEPDIYQKLNNLEGIGDKILVDIIDFFDVKENIELIKKLGEILNIEDYKETREQSSLTDKIVVFTGSLPTISRAEAKATAEKLGAKVAVGVSSNTDLVVAGVDAGSKLKKAKELNIKIIDEEEWLTLIKNV.

Residues 40 to 44 (DSEYD), 89 to 90 (SL), and Glu121 contribute to the NAD(+) site. Lys123 functions as the N6-AMP-lysine intermediate in the catalytic mechanism. 4 residues coordinate NAD(+): Arg144, Glu179, Lys295, and Lys319. 4 residues coordinate Zn(2+): Cys413, Cys416, Cys431, and Cys437. Residues 610–689 (REQSSLTDKI…EEWLTLIKNV (80 aa)) enclose the BRCT domain.

This sequence belongs to the NAD-dependent DNA ligase family. LigA subfamily. Requires Mg(2+) as cofactor. Mn(2+) serves as cofactor.

The catalysed reaction is NAD(+) + (deoxyribonucleotide)n-3'-hydroxyl + 5'-phospho-(deoxyribonucleotide)m = (deoxyribonucleotide)n+m + AMP + beta-nicotinamide D-nucleotide.. Functionally, DNA ligase that catalyzes the formation of phosphodiester linkages between 5'-phosphoryl and 3'-hydroxyl groups in double-stranded DNA using NAD as a coenzyme and as the energy source for the reaction. It is essential for DNA replication and repair of damaged DNA. This is DNA ligase from Rickettsia rickettsii (strain Iowa).